The sequence spans 134 residues: UPF0102 protein Dshi_2830 (134 aa).

This sequence belongs to the UPF0102 family.

The polypeptide is UPF0102 protein Dshi_2830 (Dinoroseobacter shibae (strain DSM 16493 / NCIMB 14021 / DFL 12)).